The chain runs to 303 residues: Probable 5-dehydro-4-deoxyglucarate dehydratase (303 aa).

Belongs to the DapA family.

The enzyme catalyses 5-dehydro-4-deoxy-D-glucarate + H(+) = 2,5-dioxopentanoate + CO2 + H2O. Its pathway is carbohydrate acid metabolism; D-glucarate degradation; 2,5-dioxopentanoate from D-glucarate: step 2/2. In Polaromonas naphthalenivorans (strain CJ2), this protein is Probable 5-dehydro-4-deoxyglucarate dehydratase.